Here is a 996-residue protein sequence, read N- to C-terminus: Oxysterol-binding protein homolog 3 (996 aa).

The segment at 1-183 (METIDIQNRS…KKKILFNASV (183 aa)) is GOLD domain. The disordered stretch occupies residues 75-114 (GSSSNIEEHHRRSSQHSHSSSNGSDNKRKERSYSSLSISG). Ser-190 and Ser-193 each carry phosphoserine. Residue Thr-210 is modified to Phosphothreonine. The region spanning 221–315 (GRYLQGYLLK…WVDALQTCFD (95 aa)) is the PH domain. Residue Thr-323 is modified to Phosphothreonine. A Phosphoserine modification is found at Ser-324. Phosphothreonine is present on residues Thr-325 and Thr-352. The segment at 338–372 (EVINKSSPQDHDHLTPTATTKSALSHRQHTQKDMD) is disordered. Positions 514–520 (EFFDAEE) match the FFAT motif. The segment at 556 to 611 (KEVQLSGSEQIASSSVESYTTNDENHSRKHLKNRHKNRRRGHPHHQKTKSAQSSTE) is disordered. Residues 558–577 (VQLSGSEQIASSSVESYTTN) are compositionally biased toward polar residues. A compositionally biased stretch (basic residues) spans 582–603 (SRKHLKNRHKNRRRGHPHHQKT). The residue at position 605 (Ser-605) is a Phosphoserine. The tract at residues 642 to 982 (SLLSFLRKNV…YITGPKSYWE (341 aa)) is OSBP-related domain (ORD). A 1,2-diacyl-sn-glycero-3-phospho-(1D-myo-inositol 4-phosphate) is bound by residues 657–660 (SIAM), Lys-717, 745–746 (HR), and 945–949 (EQLQR).

It belongs to the OSBP family. Interacts with SCS2.

The protein localises to the cytoplasm. It localises to the endoplasmic reticulum membrane. Functionally, lipid transport protein (LTP) involved in non-vesicular transfer of lipids between membranes. Functions in phosphoinositide-coupled directional transport of various lipids by carrying the lipid molecule in a hydrophobic pocket and transferring it between membranes through the cytosol. Involved in maintenance of intracellular sterol distribution and homeostasis. May serve as a sensor of PI4P levels at PM-ER membrane contact site, regulating PI4P phosphatase SAC1 activity. May be involved in ergosterol transport from the plasma membrane (PM) to the ER, however it does not bind sterols directly. Plays a role in the positive regulation of vesicular transport of ceramide from the ER to the Golgi, negatively regulating COPII-mediated ER export of cargos. This chain is Oxysterol-binding protein homolog 3, found in Saccharomyces cerevisiae (strain ATCC 204508 / S288c) (Baker's yeast).